Here is a 243-residue protein sequence, read N- to C-terminus: Ribonuclease 3 (243 aa).

In terms of domain architecture, RNase III spans V10–G146. Mg(2+) is bound at residue E59. The active site involves D63. Positions 132 and 135 each coordinate Mg(2+). The active site involves E135. The DRBM domain maps to D172 to Q241. Residues G219–A231 are compositionally biased toward basic and acidic residues. Residues G219–K243 form a disordered region.

The protein belongs to the ribonuclease III family. Homodimer. Mg(2+) serves as cofactor.

The protein localises to the cytoplasm. The enzyme catalyses Endonucleolytic cleavage to 5'-phosphomonoester.. Functionally, digests double-stranded RNA. Involved in the processing of primary rRNA transcript to yield the immediate precursors to the large and small rRNAs (23S and 16S). Processes some mRNAs, and tRNAs when they are encoded in the rRNA operon. Processes pre-crRNA and tracrRNA of type II CRISPR loci if present in the organism. This is Ribonuclease 3 from Staphylococcus aureus (strain Mu3 / ATCC 700698).